Consider the following 426-residue polypeptide: Serine--tRNA ligase (426 aa).

233 to 235 (TSE) is an L-serine binding site. Position 264–266 (264–266 (RSE)) interacts with ATP. An L-serine-binding site is contributed by Glu287. 351 to 354 (EISS) is an ATP binding site. Position 387 (Ser387) interacts with L-serine.

The protein belongs to the class-II aminoacyl-tRNA synthetase family. Type-1 seryl-tRNA synthetase subfamily. As to quaternary structure, homodimer. The tRNA molecule binds across the dimer.

Its subcellular location is the cytoplasm. It carries out the reaction tRNA(Ser) + L-serine + ATP = L-seryl-tRNA(Ser) + AMP + diphosphate + H(+). The enzyme catalyses tRNA(Sec) + L-serine + ATP = L-seryl-tRNA(Sec) + AMP + diphosphate + H(+). It functions in the pathway aminoacyl-tRNA biosynthesis; selenocysteinyl-tRNA(Sec) biosynthesis; L-seryl-tRNA(Sec) from L-serine and tRNA(Sec): step 1/1. Its function is as follows. Catalyzes the attachment of serine to tRNA(Ser). Is also able to aminoacylate tRNA(Sec) with serine, to form the misacylated tRNA L-seryl-tRNA(Sec), which will be further converted into selenocysteinyl-tRNA(Sec). This is Serine--tRNA ligase from Xylella fastidiosa (strain 9a5c).